The primary structure comprises 222 residues: DnaJ homolog subfamily B member 9 (222 aa).

An N-terminal signal peptide occupies residues 1–23 (MATPQSVFVFAICILMITELILA). One can recognise a J domain in the interval 26–90 (SYYDILGVPK…NSRKEYDTIG (65 aa)). The tract at residues 91 to 222 (HSAFTNGKGQ…VTTYTDCSGQ (132 aa)) is divergent targeting domain. A Phosphoserine modification is found at serine 133.

As to quaternary structure, interacts with HSPA5/BiP; interaction is direct. Interacts with ERN1/IRE1 (via the luminal region). Interacts with DERL1. In terms of processing, not N-glycosylated.

The protein resides in the endoplasmic reticulum lumen. In terms of biological role, co-chaperone for Hsp70 protein HSPA5/BiP that acts as a key repressor of the ERN1/IRE1-mediated unfolded protein response (UPR). J domain-containing co-chaperones stimulate the ATPase activity of Hsp70 proteins and are required for efficient substrate recognition by Hsp70 proteins. In the unstressed endoplasmic reticulum, interacts with the luminal region of ERN1/IRE1 and selectively recruits HSPA5/BiP: HSPA5/BiP disrupts the dimerization of the active ERN1/IRE1 luminal region, thereby inactivating ERN1/IRE1. Also involved in endoplasmic reticulum-associated degradation (ERAD) of misfolded proteins. Required for survival of B-cell progenitors and normal antibody production. This chain is DnaJ homolog subfamily B member 9, found in Mus musculus (Mouse).